Reading from the N-terminus, the 296-residue chain is METTYKLLDGKKISGEIKQEIAAVVNELLEKGGRRPHLAGVLVGHDGGSETYMASKVKACEEVGFTSSLIRYEDDVTEEELLACVHRLNQDPTVDGFIVQLPLPKHIDEQKIIEAVDPRKDVDGFHPINVGRLSIGLPGFVSATPKGIVELLRRYNIPTRGKHCVVLGRSNIVGKPVSQLLLQKGEPGDCTITICHSRTPNIKEVCLTADIIIAALGQPEFLTADMVKPGAVVVDVGTTLVPDSTRKSGFRLTGDVKFDEVAPKCSYITPVPGGVGPMTIVSLMSNTLLASKGLYR.

Residues 168–170, S197, and T238 contribute to the NADP(+) site; that span reads GRS.

The protein belongs to the tetrahydrofolate dehydrogenase/cyclohydrolase family. As to quaternary structure, homodimer.

It catalyses the reaction (6R)-5,10-methylene-5,6,7,8-tetrahydrofolate + NADP(+) = (6R)-5,10-methenyltetrahydrofolate + NADPH. The catalysed reaction is (6R)-5,10-methenyltetrahydrofolate + H2O = (6R)-10-formyltetrahydrofolate + H(+). The protein operates within one-carbon metabolism; tetrahydrofolate interconversion. Its function is as follows. Catalyzes the oxidation of 5,10-methylenetetrahydrofolate to 5,10-methenyltetrahydrofolate and then the hydrolysis of 5,10-methenyltetrahydrofolate to 10-formyltetrahydrofolate. In Porphyromonas gingivalis (strain ATCC BAA-308 / W83), this protein is Bifunctional protein FolD.